Consider the following 168-residue polypeptide: Anti-sigma-F factor RsbW (168 aa).

The segment at 1–31 (MTDQLEDQTQGGSTVDRSLPGGCMADSDLPT) is disordered. Over residues 7–16 (DQTQGGSTVD) the composition is skewed to polar residues. 124 to 128 (PGSFS) serves as a coordination point for ATP.

It belongs to the anti-sigma-factor family. As to quaternary structure, homodimer.

Its function is as follows. A cognate anti-sigma factor for alternative sigma factor SigF. Alternative sigma factors are held in an inactive form by an anti-sigma factor. Binds ATP and GTP, may hydrolyze both. The sequence is that of Anti-sigma-F factor RsbW (rsbW) from Mycobacterium tuberculosis (strain CDC 1551 / Oshkosh).